The primary structure comprises 347 residues: NADH-ubiquinone oxidoreductase chain 2 (347 aa).

10 helical membrane passes run 13–33 (IFAG…WVGL), 55–75 (AAIK…MAIL), 96–116 (LMIV…FWVP), 123–143 (PLMS…SIMY), 150–170 (NVSL…WGGL), 178–198 (ILAY…PYNP), 201–221 (TILN…LLNL), 247–267 (TLLS…WLII), 277–297 (ITPT…LRLI), and 325–345 (FLPT…FMLM).

The protein belongs to the complex I subunit 2 family. Core subunit of respiratory chain NADH dehydrogenase (Complex I) which is composed of 45 different subunits. Interacts with TMEM242.

The protein resides in the mitochondrion inner membrane. It catalyses the reaction a ubiquinone + NADH + 5 H(+)(in) = a ubiquinol + NAD(+) + 4 H(+)(out). Core subunit of the mitochondrial membrane respiratory chain NADH dehydrogenase (Complex I) which catalyzes electron transfer from NADH through the respiratory chain, using ubiquinone as an electron acceptor. Essential for the catalytic activity and assembly of complex I. The sequence is that of NADH-ubiquinone oxidoreductase chain 2 from Gorilla gorilla gorilla (Western lowland gorilla).